The following is a 218-amino-acid chain: Akirin (218 aa).

The interval 96 to 150 (KAIPRSNDFDDDGDQRGDGCSSNYSKAYRAPSSPKSGSDSEGEAPSTSVTDRSSA) is disordered. The segment covering 128–147 (SPKSGSDSEGEAPSTSVTDR) has biased composition (polar residues).

The protein belongs to the akirin family. Interacts with hda-1, a component of the NuRD complex. Interacts with let-418, a component of the NuRD and MEC complexes. Interacts with the transcription factor ceh-18. Interacts with ima-2. Localizes to somatic tissues throughout the body, including muscle cells. Expressed in lateral epithelial seam cells, the hyp7 epidermal syncytium, and multiple head and tail neurons.

The protein resides in the nucleus. Molecular adapter that acts as a bridge between a variety of multiprotein complexes, and which is involved in antifungal innate immunity, development of the muscle and sister chromatid cohesion. Plays a role in antifungal innate immunity by acting as a bridge between components of the NuRD (Nucleosome Remodeling and Deacetylase) and MEC chromatin remodeling complexes. NuRD and MEC complexes bind to the promoters of antimicrobial peptide genes and may recruit other proteins such as ceh-18 to control gene expression in response to fungal infection. During meiotic prophase I, plays a role in the disassembly of synaptonemal complex proteins and in the regulation of chromosome condensation and segregation. Together with nuclear import receptor ima-2, required for the import and load of cohesin complex proteins in meiotic nuclei, possibly by acting as a bridge between ima-2 and cohesins. Required for embryonic development of muscle tissue. This chain is Akirin, found in Caenorhabditis elegans.